The chain runs to 319 residues: MDLSAIYESLQSMSHDLSSDHGGTESLGGLWNINSDSIPSGVTSRLTGRSTSLVEGRSCGWVPPPPGFAPLAPRPGPELSPSPTSPTATPTTSSRYKTELCRTYSESGRCRYGAKCQFAHGLGELRQANRHPKYKTELCHKFYLQGRCPYGSRCHFIHNPTEDLALPGQPHVLRQSISFSGLPSGRRSSPPPPGFSGPSLSSCSFSPSSSPPPPGDLPLSPSAFSAAPGTPVTRRDPNQACCPSCRRSTTPSTIWGPLGGLARSPSAHSLGSDPDDYASSGSSLGGSDSPVFEAGVFGPPQTPAPPRRLPIFNRISVSE.

A necessary for nuclear export region spans residues 1-15; it reads MDLSAIYESLQSMSH. Positions 1 to 92 are necessary and sufficient for the association with mRNA decay enzymes and mRNA decay activation; the sequence is MDLSAIYESL…PTSPTATPTT (92 aa). 2 necessary for localization of ARE-containing mRNAs to processing bodies (PBs) regions span residues 1–166 and 92–319; these read MDLS…DLAL and TSSR…SVSE. The residue at position 52 (serine 52) is a Phosphoserine; by MAPKAPK2. Serine 58 is subject to Phosphoserine. One copy of the P-P-P-P-G repeat lies at 63–67; the sequence is PPPPG. Pro residues predominate over residues 65-84; the sequence is PPGFAPLAPRPGPELSPSPT. The segment at 65–95 is disordered; that stretch reads PPGFAPLAPRPGPELSPSPTSPTATPTTSSR. Phosphoserine occurs at positions 80 and 82. Phosphothreonine is present on threonine 84. A Phosphoserine modification is found at serine 85. A compositionally biased stretch (low complexity) spans 85–94; that stretch reads SPTATPTTSS. The tract at residues 87-160 is necessary for nuclear localization; that stretch reads TATPTTSSRY…GSRCHFIHNP (74 aa). Residues 89-165 form a necessary for RNA-binding region; the sequence is TPTTSSRYKT…FIHNPTEDLA (77 aa). 2 consecutive C3H1-type zinc fingers follow at residues 95 to 123 and 133 to 161; these read RYKTELCRTYSESGRCRYGAKCQFAHGLG and KYKTELCHKFYLQGRCPYGSRCHFIHNPT. The necessary for interaction with PABPN1 stretch occupies residues 95–186; it reads RYKTELCRTY…ISFSGLPSGR (92 aa). The segment at 166–319 is necessary for mRNA decay activation; that stretch reads LPGQPHVLRQ…PIFNRISVSE (154 aa). A Phosphoserine; by MAPKAPK2 modification is found at serine 178. Residues 179–188 show a composition bias toward low complexity; the sequence is FSGLPSGRRS. The interval 179-309 is disordered; sequence FSGLPSGRRS…PQTPAPPRRL (131 aa). At serine 189 the chain carries Phosphoserine. Residues 190–194 form a P-P-P-P-G repeat; it reads PPPPG. Residues 196–208 are compositionally biased toward low complexity; the sequence is SGPSLSSCSFSPS. Serine 210 bears the Phosphoserine mark. A P-P-P-P-G repeat occupies 211–215; the sequence is PPPPG. Residue serine 220 is modified to Phosphoserine; by MAPK1; in vitro. At threonine 250 the chain carries Phosphothreonine. Serine 269, serine 289, and serine 316 each carry phosphoserine. Over residues 279-289 the composition is skewed to low complexity; the sequence is SSGSSLGGSDS. The segment at 305–319 is interaction with CNOT1; it reads PPRRLPIFNRISVSE.

As to quaternary structure, associates with cytoplasmic CCR4-NOT and PAN2-PAN3 deadenylase complexes to trigger ARE-containing mRNA deadenylation and decay processes. Part of a mRNA decay activation complex at least composed of poly(A)-specific exoribonucleases CNOT6, EXOSC2 and XRN1 and mRNA-decapping enzymes DCP1A and DCP2. Associates with the RNA exosome complex. Interacts (via phosphorylated form) with 14-3-3 proteins; these interactions promote exclusion of ZFP36 from cytoplasmic stress granules in response to arsenite treatment in a MAPKAPK2-dependent manner and does not prevent CCR4-NOT deadenylase complex recruitment or ZFP36-induced ARE-containing mRNA deadenylation and decay processes. Interacts with 14-3-3 proteins; these interactions occur in response to rapamycin in an Akt-dependent manner. Interacts with AGO2 and AGO4. Interacts (via C-terminus) with CNOT1; this interaction occurs in a RNA-independent manner and induces mRNA deadenylation. Interacts (via N-terminus) with CNOT6. Interacts with CNOT6L. Interacts (via C-terminus) with CNOT7; this interaction occurs in a RNA-independent manner, induces mRNA deadenylation and is inhibited in a phosphorylation MAPKAPK2-dependent manner. Interacts (via unphosphorylated form) with CNOT8; this interaction occurs in a RNA-independent manner and is inhibited in a phosphorylation MAPKAPK2-dependent manner. Interacts with DCP1A. Interacts (via N-terminus) with DCP2. Interacts with EDC3. Interacts (via N-terminus) with EXOSC2. Interacts with heat shock 70 kDa proteins. Interacts with KHSRP; this interaction increases upon cytokine-induced treatment. Interacts with MAP3K4; this interaction enhances the association with SH3KBP1/CIN85. Interacts with MAPKAPK2; this interaction occurs upon skeletal muscle satellite cell activation. Interacts with NCL. Interacts with NUP214; this interaction increases upon lipopolysaccharide (LPS) stimulation. Interacts with PABPC1; this interaction occurs in a RNA-dependent manner. Interacts (via hypophosphorylated form) with PABPN1 (via RRM domain and C-terminal arginine-rich region); this interaction occurs in the nucleus in a RNA-independent manner, decreases in presence of single-stranded poly(A) RNA-oligomer and in a p38 MAPK-dependent-manner and inhibits nuclear poly(A) tail synthesis. Interacts with PAN2. Interacts (via C3H1-type zinc finger domains) with PKM. Interacts (via C3H1-type zinc finger domains) with nuclear RNA poly(A) polymerase. Interacts with PPP2CA; this interaction occurs in LPS-stimulated cells and induces ZFP36 dephosphorylation, and hence may promote ARE-containing mRNAs decay. Interacts (via C-terminus) with PRR5L (via C-terminus); this interaction may accelerate ZFP36-mediated mRNA decay during stress. Interacts (via C-terminus) with SFN; this interaction occurs in a phosphorylation-dependent manner. Interacts (via extreme C-terminal region) with SH3KBP1/CIN85 (via SH3 domains); this interaction enhances MAP3K4-induced phosphorylation of ZFP36 at Ser-58 and Ser-85 and does not alter neither ZFP36 binding to ARE-containing transcripts nor TNF-alpha mRNA decay. Interacts with XRN1. Interacts (via C-terminus and Ser-178 phosphorylated form) with YWHAB; this interaction occurs in a p38/MAPKAPK2-dependent manner, increases cytoplasmic localization of ZFP36 and protects ZFP36 from Ser-178 dephosphorylation by serine/threonine phosphatase 2A, and hence may be crucial for stabilizing ARE-containing mRNAs. Interacts (via phosphorylated form) with YWHAE. Interacts (via C-terminus) with YWHAG; this interaction occurs in a phosphorylation-dependent manner. Interacts with YWHAH; this interaction occurs in a phosphorylation-dependent manner. Interacts with YWHAQ; this interaction occurs in a phosphorylation-dependent manner. Interacts with (via C-terminus) YWHAZ; this interaction occurs in a phosphorylation-dependent manner. Does not interact with SH3KBP1. Interacts (via the 4EHP-binding motif) with EIF4E2; the interaction is direct. Interacts (via P-P-P-P-G repeats) with GIGYF2; the interaction is direct. In terms of processing, phosphorylated. Phosphorylation at serine and/or threonine residues occurs in a p38 MAPK- and MAPKAPK2-dependent manner. Phosphorylated by MAPKAPK2 at Ser-52 and Ser-178; phosphorylation increases its stability and cytoplasmic localization, promotes binding to 14-3-3 adapter proteins and inhibits the recruitment of cytoplasmic CCR4-NOT and PAN2-PAN3 deadenylase complexes to the mRNA decay machinery, thereby inhibiting ZFP36-induced ARE-containing mRNA deadenylation and decay processes. Phosphorylation by MAPKAPK2 does not impair ARE-containing RNA-binding. Phosphorylated in a MAPKAPK2- and p38 MAPK-dependent manner upon skeletal muscle satellite cell activation; this phosphorylation inhibits ZFP36-mediated mRNA decay activity, and hence stabilizes MYOD1 mRNA. Phosphorylated by MAPK1 upon mitogen stimulation. Phosphorylated at Ser-58 and Ser-85; these phosphorylations increase in a SH3KBP1-dependent manner. Phosphorylated at serine and threonine residues in a pyruvate kinase PKM- and p38 MAPK-dependent manner. Phosphorylation at Ser-52 may participate in the PKM-mediated degradation of ZFP36 in a p38 MAPK-dependent manner. Dephosphorylated by serine/threonine phosphatase 2A at Ser-178. Post-translationally, ubiquitinated; pyruvate kinase (PKM)-dependent ubiquitination leads to proteasomal degradation through a p38 MAPK signaling pathway. Expressed in skeletal muscle satellite cells. Strongly expressed in differentiated adipocytes compared to preadipocytes (at protein level). Expressed in embryonic stem cells (ESCs). Expressed in heart, placenta, kidney, intestine, liver, lung, thymus, fat and spleen.

The protein localises to the nucleus. Its subcellular location is the cytoplasm. It localises to the cytoplasmic granule. It is found in the P-body. Functionally, zinc-finger RNA-binding protein that destabilizes numerous cytoplasmic AU-rich element (ARE)-containing mRNA transcripts by promoting their poly(A) tail removal or deadenylation, and hence provide a mechanism for attenuating protein synthesis. Acts as an 3'-untranslated region (UTR) ARE mRNA-binding adapter protein to communicate signaling events to the mRNA decay machinery. Recruits deadenylase CNOT7 (and probably the CCR4-NOT complex) via association with CNOT1, and hence promotes ARE-mediated mRNA deadenylation. Also functions by recruiting components of the cytoplasmic RNA decay machinery to the bound ARE-containing mRNAs. Self-regulates by destabilizing its own mRNA. Binds to 3'-UTR ARE of numerous mRNAs and of its own mRNA. Plays a role in anti-inflammatory responses; suppresses tumor necrosis factor (TNF)-alpha production by stimulating ARE-mediated TNF-alpha mRNA decay and several other inflammatory ARE-containing mRNAs in interferon (IFN)- and/or lipopolysaccharide (LPS)-induced macrophages. Also plays a role in the regulation of dendritic cell maturation at the post-transcriptional level, and hence operates as part of a negative feedback loop to limit the inflammatory response. Promotes ARE-mediated mRNA decay of hypoxia-inducible factor HIF1A mRNA during the response of endothelial cells to hypoxia. Positively regulates early adipogenesis of preadipocytes by promoting ARE-mediated mRNA decay of immediate early genes (IEGs). Negatively regulates hematopoietic/erythroid cell differentiation by promoting ARE-mediated mRNA decay of the transcription factor STAT5B mRNA. Plays a role in maintaining skeletal muscle satellite cell quiescence by promoting ARE-mediated mRNA decay of the myogenic determination factor MYOD1 mRNA. Also associates with and regulates the expression of non-ARE-containing target mRNAs at the post-transcriptional level, such as MHC class I mRNAs. Participates in association with argonaute RISC catalytic components in the ARE-mediated mRNA decay mechanism; assists microRNA (miRNA) targeting ARE-containing mRNAs. May also play a role in the regulation of cytoplasmic mRNA decapping; enhances decapping of ARE-containing RNAs, in vitro. Involved in the delivery of target ARE-mRNAs to processing bodies (PBs). In addition to its cytosolic mRNA-decay function, affects nuclear pre-mRNA processing. Negatively regulates nuclear poly(A)-binding protein PABPN1-stimulated polyadenylation activity on ARE-containing pre-mRNA during LPS-stimulated macrophages. Also involved in the regulation of stress granule (SG) and P-body (PB) formation and fusion. Plays a role in the regulation of keratinocyte proliferation, differentiation and apoptosis. Plays a role as a tumor suppressor by inhibiting cell proliferation in breast cancer cells. In Mus musculus (Mouse), this protein is mRNA decay activator protein ZFP36.